A 166-amino-acid polypeptide reads, in one-letter code: Large ribosomal subunit protein uL10 (166 aa).

It belongs to the universal ribosomal protein uL10 family. As to quaternary structure, part of the ribosomal stalk of the 50S ribosomal subunit. The N-terminus interacts with L11 and the large rRNA to form the base of the stalk. The C-terminus forms an elongated spine to which L12 dimers bind in a sequential fashion forming a multimeric L10(L12)X complex.

Its function is as follows. Forms part of the ribosomal stalk, playing a central role in the interaction of the ribosome with GTP-bound translation factors. This Streptococcus gordonii (strain Challis / ATCC 35105 / BCRC 15272 / CH1 / DL1 / V288) protein is Large ribosomal subunit protein uL10.